The chain runs to 176 residues: Cathelicidin-2 (176 aa).

A signal peptide spans 1–29 (METQGASLSLGRWSLWLLLLGLVLPSASA). Q30 is subject to Pyrrolidone carboxylic acid. Residues 30 to 130 (QALSYREAVL…DINCNELQSV (101 aa)) constitute a propeptide that is removed on maturation. 2 disulfides stabilise this stretch: C85–C96 and C107–C124. A disordered region spans residues 135–176 (PIRRPPIRPPFRPPFRPPVRPPIRPPFRPPFRPPIGPFPGRR). Residues 141-176 (IRPPFRPPFRPPVRPPIRPPFRPPFRPPIGPFPGRR) show a composition bias toward pro residues. A Proline amide modification is found at P173. A propeptide spans 174–176 (GRR) (removed in mature form).

The protein belongs to the cathelicidin family. In terms of processing, elastase is responsible for its maturation.

Its subcellular location is the secreted. Binds to the lipid A moiety of bacterial lipipolysaccharides (LPS), a glycolipid present in the outer membrane of all Gram-negative bacteria. Potent antimicrobial activity. This is Cathelicidin-2 (CATHL2) from Ovis aries (Sheep).